The primary structure comprises 207 residues: Low-molecular weight cobalt-containing nitrile hydratase subunit alpha (207 aa).

Co(3+)-binding residues include C109, C112, S113, and C114.

The protein belongs to the nitrile hydratase subunit alpha family. Heterodimer of an alpha and a beta chain. Co(3+) is required as a cofactor.

The catalysed reaction is an aliphatic primary amide = an aliphatic nitrile + H2O. Its function is as follows. NHase catalyzes the hydration of various nitrile compounds to the corresponding amides. This chain is Low-molecular weight cobalt-containing nitrile hydratase subunit alpha, found in Rhodococcus rhodochrous.